The primary structure comprises 177 residues: Bifunctional protein PyrR (177 aa).

Positions 99–111 (VVLVDDVLYTGRT) match the PRPP-binding motif.

Belongs to the purine/pyrimidine phosphoribosyltransferase family. PyrR subfamily. As to quaternary structure, homodimer and homohexamer; in equilibrium.

The catalysed reaction is UMP + diphosphate = 5-phospho-alpha-D-ribose 1-diphosphate + uracil. Its function is as follows. Regulates transcriptional attenuation of the pyrimidine nucleotide (pyr) operon by binding in a uridine-dependent manner to specific sites on pyr mRNA. This disrupts an antiterminator hairpin in the RNA and favors formation of a downstream transcription terminator, leading to a reduced expression of downstream genes. Also displays a weak uracil phosphoribosyltransferase activity which is not physiologically significant. The protein is Bifunctional protein PyrR of Clostridioides difficile (strain 630) (Peptoclostridium difficile).